Here is a 279-residue protein sequence, read N- to C-terminus: Hydroxyethylthiazole kinase (279 aa).

Position 58 (methionine 58) interacts with substrate. 2 residues coordinate ATP: lysine 134 and threonine 180. Glycine 207 is a substrate binding site.

The protein belongs to the Thz kinase family. The cofactor is Mg(2+).

The catalysed reaction is 5-(2-hydroxyethyl)-4-methylthiazole + ATP = 4-methyl-5-(2-phosphooxyethyl)-thiazole + ADP + H(+). The protein operates within cofactor biosynthesis; thiamine diphosphate biosynthesis; 4-methyl-5-(2-phosphoethyl)-thiazole from 5-(2-hydroxyethyl)-4-methylthiazole: step 1/1. Catalyzes the phosphorylation of the hydroxyl group of 4-methyl-5-beta-hydroxyethylthiazole (THZ). In Methanoculleus marisnigri (strain ATCC 35101 / DSM 1498 / JR1), this protein is Hydroxyethylthiazole kinase.